A 138-amino-acid chain; its full sequence is High mobility group B protein 4 (138 aa).

2 disordered regions span residues 1–41 (MKGG…PPSA) and 105–138 (LKLASGTNREEDDSDKSKSEVDEAVSEEEAEDDD). Positions 18–29 (KTRGRKAGKKTK) are enriched in basic residues. The segment at residues 35 to 104 (PKRPPSAFFV…EYIKNVQQYN (70 aa)) is a DNA-binding region (HMG box). S123 and S130 each carry phosphoserine. Residues 126–138 (DEAVSEEEAEDDD) show a composition bias toward acidic residues.

This sequence belongs to the HMGB family. In terms of tissue distribution, mostly expressed roots and flowers, and, to a lower extent, in stems and leaves.

The protein localises to the nucleus. The protein resides in the cytoplasm. It is found in the cytosol. Its function is as follows. Binds preferentially double-stranded DNA. The chain is High mobility group B protein 4 (HMGB4) from Arabidopsis thaliana (Mouse-ear cress).